Here is a 934-residue protein sequence, read N- to C-terminus: Leucine--tRNA ligase 1 (934 aa).

The 'HIGH' region signature appears at 41 to 51; it reads PYTNSPMHVGH. A 'KMSKS' region motif is present at residues 616–620; that stretch reads KMSKS. K619 contacts ATP.

It belongs to the class-I aminoacyl-tRNA synthetase family.

It is found in the cytoplasm. It carries out the reaction tRNA(Leu) + L-leucine + ATP = L-leucyl-tRNA(Leu) + AMP + diphosphate. This Saccharolobus solfataricus (strain ATCC 35092 / DSM 1617 / JCM 11322 / P2) (Sulfolobus solfataricus) protein is Leucine--tRNA ligase 1.